Consider the following 128-residue polypeptide: Small ribosomal subunit protein bS6 (128 aa).

The protein belongs to the bacterial ribosomal protein bS6 family.

Its function is as follows. Binds together with bS18 to 16S ribosomal RNA. This Acinetobacter baylyi (strain ATCC 33305 / BD413 / ADP1) protein is Small ribosomal subunit protein bS6.